The chain runs to 88 residues: Small ribosomal subunit protein bS20 (88 aa).

The disordered stretch occupies residues Met1–Arg25.

The protein belongs to the bacterial ribosomal protein bS20 family.

In terms of biological role, binds directly to 16S ribosomal RNA. The polypeptide is Small ribosomal subunit protein bS20 (Cupriavidus pinatubonensis (strain JMP 134 / LMG 1197) (Cupriavidus necator (strain JMP 134))).